The chain runs to 614 residues: Acetylcholinesterase (614 aa).

Residues 1–31 form the signal peptide; it reads MRPPWYPLHTPSLAFPLLFLLLSLLGGGARA. A disulfide bridge links Cys-100 with Cys-127. The active-site Acyl-ester intermediate is Ser-234. A disulfide bridge links Cys-288 with Cys-303. A glycan (N-linked (GlcNAc...) asparagine) is linked at Asn-296. Glu-365 serves as the catalytic Charge relay system. The N-linked (GlcNAc...) asparagine glycan is linked to Asn-381. Cys-440 and Cys-560 form a disulfide bridge. His-478 serves as the catalytic Charge relay system. Asn-495 carries N-linked (GlcNAc...) asparagine glycosylation.

It belongs to the type-B carboxylesterase/lipase family. In terms of assembly, isoform H generates GPI-anchored dimers; disulfide linked. Isoform T generates multiple structures, ranging from monomers and dimers to collagen-tailed and hydrophobic-tailed forms, in which catalytic tetramers are associated with anchoring proteins that attach them to the basal lamina or to cell membranes. In the collagen-tailed forms, isoform T subunits are associated with a specific collagen, COLQ, which triggers the formation of isoform T tetramers, from monomers and dimers. Interacts with PRIMA1. The interaction with PRIMA1 is required to anchor it to the basal lamina of cells and organize into tetramers. As to expression, predominates in most expressing tissues except erythrocytes where a glycophospholipid-attached form of ACHE predominates.

It localises to the synapse. It is found in the secreted. The protein localises to the cell membrane. The enzyme catalyses acetylcholine + H2O = choline + acetate + H(+). Functionally, terminates signal transduction at the neuromuscular junction by rapid hydrolysis of the acetylcholine released into the synaptic cleft. This Mus musculus (Mouse) protein is Acetylcholinesterase (Ache).